The primary structure comprises 94 residues: Co-chaperonin GroES (94 aa).

This sequence belongs to the GroES chaperonin family. In terms of assembly, heptamer of 7 subunits arranged in a ring. Interacts with the chaperonin GroEL.

It is found in the cytoplasm. In terms of biological role, together with the chaperonin GroEL, plays an essential role in assisting protein folding. The GroEL-GroES system forms a nano-cage that allows encapsulation of the non-native substrate proteins and provides a physical environment optimized to promote and accelerate protein folding. GroES binds to the apical surface of the GroEL ring, thereby capping the opening of the GroEL channel. This chain is Co-chaperonin GroES, found in Bacillus subtilis (strain 168).